The following is a 251-amino-acid chain: 2,3-bisphosphoglycerate-dependent phosphoglycerate mutase (251 aa).

Residues 7 to 14 (RHGESEWN), 20 to 21 (TG), Arg59, 86 to 89 (ERHY), Lys97, 113 to 114 (RR), and 186 to 187 (GN) each bind substrate. Catalysis depends on His8, which acts as the Tele-phosphohistidine intermediate. Glu86 functions as the Proton donor/acceptor in the catalytic mechanism.

It belongs to the phosphoglycerate mutase family. BPG-dependent PGAM subfamily.

The catalysed reaction is (2R)-2-phosphoglycerate = (2R)-3-phosphoglycerate. It participates in carbohydrate degradation; glycolysis; pyruvate from D-glyceraldehyde 3-phosphate: step 3/5. Catalyzes the interconversion of 2-phosphoglycerate and 3-phosphoglycerate. This Treponema pallidum (strain Nichols) protein is 2,3-bisphosphoglycerate-dependent phosphoglycerate mutase.